The chain runs to 39 residues: Cytochrome b559 subunit beta (39 aa).

The chain crosses the membrane as a helical span at residues 14-30 (WLAIHGLAVPTVFFLGS). Residue His18 coordinates heme.

Belongs to the PsbE/PsbF family. Heterodimer of an alpha subunit and a beta subunit. PSII is composed of 1 copy each of membrane proteins PsbA, PsbB, PsbC, PsbD, PsbE, PsbF, PsbH, PsbI, PsbJ, PsbK, PsbL, PsbM, PsbT, PsbX, PsbY, PsbZ, Psb30/Ycf12, at least 3 peripheral proteins of the oxygen-evolving complex and a large number of cofactors. It forms dimeric complexes. Heme b serves as cofactor.

It localises to the plastid. The protein localises to the chloroplast thylakoid membrane. In terms of biological role, this b-type cytochrome is tightly associated with the reaction center of photosystem II (PSII). PSII is a light-driven water:plastoquinone oxidoreductase that uses light energy to abstract electrons from H(2)O, generating O(2) and a proton gradient subsequently used for ATP formation. It consists of a core antenna complex that captures photons, and an electron transfer chain that converts photonic excitation into a charge separation. The chain is Cytochrome b559 subunit beta from Ephedra sinica (Chinese ephedra).